The sequence spans 492 residues: Variant surface glycoprotein MITAT 1.1 (492 aa).

The first 32 residues, 1–32, serve as a signal peptide directing secretion; the sequence is MATGRAKNTKWARWLSTAGLIIVVTLPATTMA. Intrachain disulfides connect C47/C177 and C155/C222. 2 N-linked (GlcNAc...) asparagine glycosylation sites follow: N298 and N471. A lipid anchor (GPI-anchor amidated serine) is attached at S475. The propeptide at 476-492 is removed in mature form; sequence NSFLIHKAPLLLAFLLF.

It is found in the cell membrane. VSG forms a coat on the surface of the parasite. The trypanosome evades the immune response of the host by expressing a series of antigenically distinct VSGs from an estimated 1000 VSG genes. In Trypanosoma brucei brucei, this protein is Variant surface glycoprotein MITAT 1.1.